The primary structure comprises 202 residues: Dephospho-CoA kinase (202 aa).

The 197-residue stretch at 6–202 (KISVTGDPSS…QCFKALKGTI (197 aa)) folds into the DPCK domain. Position 14 to 19 (14 to 19 (SSGKTE)) interacts with ATP.

The protein belongs to the CoaE family.

It localises to the cytoplasm. The enzyme catalyses 3'-dephospho-CoA + ATP = ADP + CoA + H(+). It participates in cofactor biosynthesis; coenzyme A biosynthesis; CoA from (R)-pantothenate: step 5/5. Its function is as follows. Catalyzes the phosphorylation of the 3'-hydroxyl group of dephosphocoenzyme A to form coenzyme A. The polypeptide is Dephospho-CoA kinase (Chlamydia trachomatis serovar A (strain ATCC VR-571B / DSM 19440 / HAR-13)).